The chain runs to 156 residues: Small ribosomal subunit protein uS7 (156 aa).

This sequence belongs to the universal ribosomal protein uS7 family. As to quaternary structure, part of the 30S ribosomal subunit. Contacts proteins S9 and S11.

In terms of biological role, one of the primary rRNA binding proteins, it binds directly to 16S rRNA where it nucleates assembly of the head domain of the 30S subunit. Is located at the subunit interface close to the decoding center, probably blocks exit of the E-site tRNA. In Streptococcus thermophilus (strain CNRZ 1066), this protein is Small ribosomal subunit protein uS7.